The following is a 207-amino-acid chain: Uracil phosphoribosyltransferase (207 aa).

Residues R77, R102, and 129–137 each bind 5-phospho-alpha-D-ribose 1-diphosphate; that span reads DPMLATGGS. Residues I192 and 197–199 contribute to the uracil site; that span reads GDA. 5-phospho-alpha-D-ribose 1-diphosphate is bound at residue D198.

This sequence belongs to the UPRTase family. Mg(2+) is required as a cofactor.

It catalyses the reaction UMP + diphosphate = 5-phospho-alpha-D-ribose 1-diphosphate + uracil. The protein operates within pyrimidine metabolism; UMP biosynthesis via salvage pathway; UMP from uracil: step 1/1. Allosterically activated by GTP. Catalyzes the conversion of uracil and 5-phospho-alpha-D-ribose 1-diphosphate (PRPP) to UMP and diphosphate. This chain is Uracil phosphoribosyltransferase, found in Ureaplasma parvum serovar 3 (strain ATCC 27815 / 27 / NCTC 11736).